A 489-amino-acid chain; its full sequence is Cytochrome P450 monooxygenase ataF (489 aa).

The chain crosses the membrane as a helical span at residues 12 to 32 (WLEHSAVIATLFAFGTALFLV). Asn-289 carries an N-linked (GlcNAc...) asparagine glycan. Cys-434 serves as a coordination point for heme.

The protein belongs to the cytochrome P450 family. Heme serves as cofactor.

Its subcellular location is the membrane. It functions in the pathway mycotoxin biosynthesis. In terms of biological role, cytochrome P450 monooxygenase; part of the gene cluster that mediates the biosynthesis of acetylaranotin, a member of the epipolythiodioxopiperazine (ETP) class of toxins characterized by a disulfide-bridged cyclic dipeptide. The first step of acetylaranotin biosynthesis is performed by the NRPS ataP which produces diketopiperazine cyclo-L-Phe-L-Phe via the condensation of 2 phenylalanines (L-Phe). The ataC domain of ataTC then catalyzes the formation of bishydroxylation of cyclo-L-Phe-L-Phe. The glutathione S-transferase domain ataG in ataIMG further catalyzes the conjugation of two glutathiones to the bishydroxylated intermediate. Next, the dipeptidase ataJ removes the Glu residues. The following step is performed by the carbon sulfur lyase domain ataI of ataIMG which may convert the bis-cysteinyl adduct to yield an epidithiol intermediate. The ataT domain from ataTC then catalyzes the oxidation of the free dithiols, followed by a cyclization step catalyzed by the cytochrome P450 ataF. AtaF probably acts as an epoxidase to promote a dual epoxidation formation at C8 and C9 along with C8' and C9', followed by the spontaneous nucleophilic attack of the amide nitrogens N10 and N10' to yield an intermediate with the pyrrolidine partial structure. The final steps of acetylaranotin biosynthesis involve the acetylation and ring rearrangement of an epitetrathiodiketopiperazine intermediate to produce acetylaranotin. AtaH probably catalyzes the acetylation of epitetrathiodiketopiperazine to produce a diacetate and ataY is responsible for the formation of the dihydrooxepin moiety that converts the diacetate intermediate to acetylaranotin via acetylapoaranotin. Both enzymes could function independently in the absence of the other. The acetylaranotin bis-thiomethyltransferase ataS located outside of acetylaranotin gene cluster is the main thiomethyltransferase responsible for converting acetylaranotin and its related intermediates to their methylated forms. In Aspergillus terreus (strain NIH 2624 / FGSC A1156), this protein is Cytochrome P450 monooxygenase ataF.